Reading from the N-terminus, the 700-residue chain is Serine/threonine-protein kinase WNK1 (700 aa).

A Protein kinase domain is found at 24–281 (GRYNEVLGKG…ARELLDDPFL (258 aa)). Residues 104–107 (TELF) and Lys-154 contribute to the ATP site. The active-site Proton acceptor is Asp-171. Over residues 314–339 (NYPSNSSSLNRQYSNGNYPSNSSSLN) the composition is skewed to low complexity. Disordered stretches follow at residues 314-345 (NYPS…YSNG), 551-575 (ESRE…EVLY), and 647-666 (ESGE…SVSG). The span at 551–565 (ESRELSSIDSGHNHS) shows a compositional bias: basic and acidic residues. A compositionally biased stretch (acidic residues) spans 566 to 575 (EEEEEEEVLY).

The protein belongs to the protein kinase superfamily. Ser/Thr protein kinase family. WNK subfamily. In terms of processing, autophosphorylated.

The enzyme catalyses L-seryl-[protein] + ATP = O-phospho-L-seryl-[protein] + ADP + H(+). The catalysed reaction is L-threonyl-[protein] + ATP = O-phospho-L-threonyl-[protein] + ADP + H(+). Regulates flowering time by modulating the photoperiod pathway. Phosphorylates APRR3. This chain is Serine/threonine-protein kinase WNK1 (WNK1), found in Arabidopsis thaliana (Mouse-ear cress).